The following is a 331-amino-acid chain: Aromatic 2-oxoacid reductase (331 aa).

Residues 154–155, Asp175, 205–206, Asn211, 232–234, and Asp258 contribute to the NAD(+) site; these read RI, AP, and AAR. Residue Arg234 is part of the active site. Glu263 is a catalytic residue. The active-site Proton donor is His295.

The protein belongs to the D-isomer specific 2-hydroxyacid dehydrogenase family.

It catalyses the reaction (R)-3-phenyllactate + NAD(+) = 3-phenylpyruvate + NADH + H(+). It carries out the reaction (2R)-2-hydroxy-3-(4-hydroxyphenyl)propanoate + NAD(+) = 3-(4-hydroxyphenyl)pyruvate + NADH + H(+). The catalysed reaction is 3-(indol-3-yl)lactate + NAD(+) = indole-3-pyruvate + NADH + H(+). It functions in the pathway amino-acid degradation. Functionally, essential for the reductive metabolism of L-phenylalanine, L-tyrosine and L-tryptophan. Catalyzes the conversion of phenylpyruvic acid to phenyllactic acid, 4-hydroxy-phenylpyruvic acid to 4-hydroxy-phenyllactic acid, and indolepyruvic acid to indolelactic acid. The chain is Aromatic 2-oxoacid reductase from Clostridium sporogenes (strain ATCC 15579).